The primary structure comprises 114 residues: MGAPEPSWCFLFLPVLLTVGGLSPVQAQSDNYPGCECSSVSPGVLAGIVLGDLVLTLLIALAVYSLGRLVSRGRGTADGTRKQHMAETESPYQELQGQRPEVYSDLNTQRQYYR.

The signal sequence occupies residues 1–27; the sequence is MGAPEPSWCFLFLPVLLTVGGLSPVQA. The Extracellular segment spans residues 28–42; it reads QSDNYPGCECSSVSP. The chain crosses the membrane as a helical span at residues 43–63; that stretch reads GVLAGIVLGDLVLTLLIALAV. Position 52 (Asp52) interacts with Ca(2+). At 64 to 114 the chain is on the cytoplasmic side; that stretch reads YSLGRLVSRGRGTADGTRKQHMAETESPYQELQGQRPEVYSDLNTQRQYYR. A disordered region spans residues 72 to 114; that stretch reads RGRGTADGTRKQHMAETESPYQELQGQRPEVYSDLNTQRQYYR. Positions 81–109 constitute an ITAM domain; sequence RKQHMAETESPYQELQGQRPEVYSDLNTQ. Phosphotyrosine is present on residues Tyr92 and Tyr103. The span at 105–114 shows a compositional bias: polar residues; sequence DLNTQRQYYR.

This sequence belongs to the TYROBP family. As to quaternary structure, homodimer; disulfide-linked. Homotrimer; disulfide-linked. Homotetramer; disulfide-linked. Homotrimers and homotetramers form when low levels of partner receptors are available and is competitive with assembly with interacting receptors. They may represent alternative oligomerization states or may be intermediates in the receptor assembly process. Binding of a metal cation aids in homooligomerization through coordination of the metal ion by the subunits of the oligomer. Interacts with TREM1. Interacts with TREM2. Interacts with CLECSF5. Interacts with CD300LB and CD300C2. Interacts with CD300E. Interacts (via ITAM domain) with SYK (via SH2 domains); activates SYK mediating neutrophils and macrophages integrin-mediated activation. Interacts with KLRC2. Interacts with CD300H. Interacts with KLRD1. Interacts with SIGLEC1. Post-translationally, following ligand binding by associated receptors, tyrosine phosphorylated in the ITAM domain which leads to activation of additional tyrosine kinases and subsequent cell activation.

It is found in the cell membrane. Functionally, adapter protein which non-covalently associates with activating receptors found on the surface of a variety of immune cells to mediate signaling and cell activation following ligand binding by the receptors. TYROBP is tyrosine-phosphorylated in the ITAM domain following ligand binding by the associated receptors which leads to activation of additional tyrosine kinases and subsequent cell activation. Also has an inhibitory role in some cells. Non-covalently associates with activating receptors of the CD300 family to mediate cell activation. Also mediates cell activation through association with activating receptors of the CD200R family. Required for neutrophil activation mediated by integrin. Required for the activation of myeloid cells mediated by the CLEC5A/MDL1 receptor. Associates with natural killer (NK) cell receptors such as the KLRD1/KLRC2 heterodimer to mediate NK cell activation. Associates with TREM1 to mediate activation of neutrophils and monocytes. Associates with TREM2 on monocyte-derived dendritic cells to mediate up-regulation of chemokine receptor CCR7 and dendritic cell maturation and survival. PAssociation with TREM2 mediates cytokine-induced formation of multinucleated giant cells which are formed by the fusion of macrophages. Stabilizes the TREM2 C-terminal fragment (TREM2-CTF) produced by TREM2 ectodomain shedding which suppresses the release of pro-inflammatory cytokines. In microglia, required with TREM2 for phagocytosis of apoptotic neurons. Required with ITGAM/CD11B in microglia to control production of microglial superoxide ions which promote the neuronal apoptosis that occurs during brain development. Promotes pro-inflammatory responses in microglia following nerve injury which accelerates degeneration of injured neurons. ositively regulates the expression of the IRAK3/IRAK-M kinase and IL10 production by liver dendritic cells and inhibits their T cell allosimulatory ability. Negatively regulates B cell proliferation. Required for CSF1-mediated osteoclast cytoskeletal organization. Positively regulates multinucleation during osteoclast development. This Rattus norvegicus (Rat) protein is TYRO protein tyrosine kinase-binding protein.